The following is a 583-amino-acid chain: Isocitrate dehydrogenase kinase/phosphatase (583 aa).

Residues 315–321 and K336 each bind ATP; that span reads APGIRGM. The active site involves D371.

Belongs to the AceK family.

It is found in the cytoplasm. It carries out the reaction L-seryl-[isocitrate dehydrogenase] + ATP = O-phospho-L-seryl-[isocitrate dehydrogenase] + ADP + H(+). Its function is as follows. Bifunctional enzyme which can phosphorylate or dephosphorylate isocitrate dehydrogenase (IDH) on a specific serine residue. This is a regulatory mechanism which enables bacteria to bypass the Krebs cycle via the glyoxylate shunt in response to the source of carbon. When bacteria are grown on glucose, IDH is fully active and unphosphorylated, but when grown on acetate or ethanol, the activity of IDH declines drastically concomitant with its phosphorylation. The polypeptide is Isocitrate dehydrogenase kinase/phosphatase (Salmonella agona (strain SL483)).